Consider the following 275-residue polypeptide: 3-methyl-2-oxobutanoate hydroxymethyltransferase (275 aa).

Residues D49 and D88 each contribute to the Mg(2+) site. Residues 49–50 (DS), D88, and K118 contribute to the 3-methyl-2-oxobutanoate site. E120 is a Mg(2+) binding site. Residue E187 is the Proton acceptor of the active site.

This sequence belongs to the PanB family. Homodecamer; pentamer of dimers. Requires Mg(2+) as cofactor.

The protein resides in the cytoplasm. The catalysed reaction is 3-methyl-2-oxobutanoate + (6R)-5,10-methylene-5,6,7,8-tetrahydrofolate + H2O = 2-dehydropantoate + (6S)-5,6,7,8-tetrahydrofolate. Its pathway is cofactor biosynthesis; (R)-pantothenate biosynthesis; (R)-pantoate from 3-methyl-2-oxobutanoate: step 1/2. Its function is as follows. Catalyzes the reversible reaction in which hydroxymethyl group from 5,10-methylenetetrahydrofolate is transferred onto alpha-ketoisovalerate to form ketopantoate. This Brucella melitensis biotype 1 (strain ATCC 23456 / CCUG 17765 / NCTC 10094 / 16M) protein is 3-methyl-2-oxobutanoate hydroxymethyltransferase.